The following is a 373-amino-acid chain: GDP-mannose 4,6-dehydratase (373 aa).

Residues 9–14 (GVTGQD), 64–65 (DL), 86–90 (LGAMS), and tyrosine 101 each bind NADP(+). Threonine 133 is an active-site residue. Residues glutamate 135 and tyrosine 157 each act as nucleophile in the active site. Residues lysine 161, histidine 187, and arginine 192 each contribute to the NADP(+) site.

It belongs to the NAD(P)-dependent epimerase/dehydratase family. GDP-mannose 4,6-dehydratase subfamily. Requires NADP(+) as cofactor.

The enzyme catalyses GDP-alpha-D-mannose = GDP-4-dehydro-alpha-D-rhamnose + H2O. The protein operates within nucleotide-sugar biosynthesis; GDP-L-fucose biosynthesis via de novo pathway; GDP-L-fucose from GDP-alpha-D-mannose: step 1/2. In terms of biological role, catalyzes the conversion of GDP-D-mannose to GDP-4-dehydro-6-deoxy-D-mannose. The polypeptide is GDP-mannose 4,6-dehydratase (Escherichia coli O157:H7).